The primary structure comprises 441 residues: N-acetylmuramyl-L-alanine amidase (441 aa).

Residues 1 to 25 (MKTKTLFIFSAILTLSIFAPNETFA) form the signal peptide.

The protein belongs to the peptidase S12 family.

It catalyses the reaction Hydrolyzes the link between N-acetylmuramoyl residues and L-amino acid residues in certain cell-wall glycopeptides.. The protein operates within cell wall biogenesis; peptidoglycan recycling. Functionally, involved in muropeptide recycling. Hydrolyzes the amide bond between N-acetylmuramic acid (MurNAc) and the L-alanine residue of the stem peptide. Cannot hydrolyze muropeptides containing N-acetylglucosamine (GlcNAc) at the non-reducing end. In Bacillus subtilis (strain 168), this protein is N-acetylmuramyl-L-alanine amidase.